A 782-amino-acid polypeptide reads, in one-letter code: Gelsolin (782 aa).

The signal sequence occupies residues 1-27 (MAPHRPAPALLCALSLALCALSLPVRA). Residues 53–176 (VVEHPEFLKA…YKKGGVASGF (124 aa)) form an actin-severing region. Residues 76–158 (FDLVPVPTNL…VQGFESATFL (83 aa)) form a Gelsolin-like 1 repeat. Y86 is modified (phosphotyrosine; by SRC; in vitro). Positions 92, 93, 124, 136, 141, and 143 each coordinate Ca(2+). An actin-actin interfilament contact point region spans residues 123-126 (DESG). Residue 162–169 (KSGLKYKK) participates in a 1,2-diacyl-sn-glycero-3-phospho-(1D-myo-inositol-4,5-bisphosphate) binding. A Ca(2+)-binding site is contributed by V172. 188-196 (RLFQVKGRR) provides a ligand contact to a 1,2-diacyl-sn-glycero-3-phospho-(1D-myo-inositol-4,5-bisphosphate). The stretch at 198 to 270 (VRATEVPVSW…SEEGTEPEAM (73 aa)) is one Gelsolin-like 2 repeat. Ca(2+) contacts are provided by G213 and D214. An intrachain disulfide couples C215 to C228. E236 is a binding site for Ca(2+). Positions 247-262 (IRDNERSGRARVHVSE) are enriched in basic and acidic residues. The tract at residues 247–285 (IRDNERSGRARVHVSEEGTEPEAMLQVLGPKPALPAGTE) is disordered. Ca(2+) contacts are provided by D286, E329, D330, and E354. The stretch at 317 to 389 (DENPFAQGAL…LPEGGETPLF (73 aa)) is one Gelsolin-like 3 repeat. Phosphotyrosine; by SRC; in vitro is present on Y409. An actin-binding, Ca-sensitive region spans residues 434-782 (AAQHGMDDDG…LDRAMAELAA (349 aa)). The stretch at 455–536 (SNKVPVDPAT…VQGKEPAHLM (82 aa)) is one Gelsolin-like 4 repeat. Position 465 is a phosphotyrosine; by SRC (Y465). 7 residues coordinate Ca(2+): G471, D472, E502, D514, G519, P521, and T551. One copy of the Gelsolin-like 5 repeat lies at 576-642 (TRAVEVLPKA…AEGSEPDGFW (67 aa)). The residue at position 584 (K584) is an N6-acetyllysine. Residues N591 and D592 each coordinate Ca(2+). A Phosphotyrosine; by SRC; in vitro modification is found at Y603. E614 contacts Ca(2+). Residue Y651 is modified to Phosphotyrosine; by SRC; in vitro. Residues 681–756 (IEEVPGELMQ…VKQGFEPPSF (76 aa)) form a Gelsolin-like 6 repeat. Residues D696, D697, and E719 each contribute to the Ca(2+) site. T742 carries the post-translational modification Phosphothreonine.

Belongs to the villin/gelsolin family. As to quaternary structure, binds to actin and to fibronectin. Identified in a complex composed of ACTA1, COBL, GSN and TMSB4X. Interacts with the inactive form of EIF2AK2/PKR. Interacts with FLII. Phosphorylation on Tyr-86, Tyr-409, Tyr-465, Tyr-603 and Tyr-651 in vitro is induced in presence of phospholipids. Phagocytic cells, platelets, fibroblasts, nonmuscle cells, smooth and skeletal muscle cells.

The protein resides in the cytoplasm. It is found in the cytoskeleton. It localises to the secreted. In terms of biological role, calcium-regulated, actin-modulating protein that binds to the plus (or barbed) ends of actin monomers or filaments, preventing monomer exchange (end-blocking or capping). It can promote the assembly of monomers into filaments (nucleation) as well as sever filaments already formed. Plays a role in ciliogenesis. This chain is Gelsolin (GSN), found in Homo sapiens (Human).